The primary structure comprises 567 residues: Sporulation-specific protein 5 (567 aa).

Over residues methionine 1–serine 18 the composition is skewed to polar residues. Disordered regions lie at residues methionine 1–asparagine 39 and isoleucine 52–asparagine 76. Residues proline 21 to threonine 35 are compositionally biased toward low complexity. Residues proline 56 to serine 66 show a composition bias toward polar residues. RRM domains lie at arginine 296–aspartate 380 and threonine 384–serine 462.

It is found in the cytoplasm. RNA-binding protein which plays a role in sporulation. Regulates the progression of meiosis I and may function in the vicinity of the Mei2 dot. The protein is Sporulation-specific protein 5 (spo5) of Schizosaccharomyces pombe (strain 972 / ATCC 24843) (Fission yeast).